We begin with the raw amino-acid sequence, 56 residues long: Large ribosomal subunit protein bL33 (56 aa).

It belongs to the bacterial ribosomal protein bL33 family.

The polypeptide is Large ribosomal subunit protein bL33 (Rickettsia typhi (strain ATCC VR-144 / Wilmington)).